Consider the following 241-residue polypeptide: Large ribosomal subunit protein uL3 (241 aa).

Disordered regions lie at residues 140–168 and 216–241; these read SHRSIGSTGGRQDPGKTFKNKKMPGHMGD and APKPGAFKLNGSEAAPAAEAVNEEGA. N5-methylglutamine is present on Gln151.

This sequence belongs to the universal ribosomal protein uL3 family. As to quaternary structure, part of the 50S ribosomal subunit. Forms a cluster with proteins L14 and L19. In terms of processing, methylated by PrmB.

One of the primary rRNA binding proteins, it binds directly near the 3'-end of the 23S rRNA, where it nucleates assembly of the 50S subunit. The protein is Large ribosomal subunit protein uL3 of Xanthobacter autotrophicus (strain ATCC BAA-1158 / Py2).